The following is a 681-amino-acid chain: PTS system glucose-specific EIICBA component (681 aa).

In terms of domain architecture, PTS EIIC type-1 spans 3-414 (KKLFGQLQRI…LKYKTPGRED (412 aa)). The next 10 helical transmembrane spans lie at 16–36 (LMLPVAILPAAGLLLAIGTAI), 73–93 (MIFALGVAIGLAGGDGVAAIA), 126–146 (ILGIPTLQTGVFGGIIIGALA), 170–190 (FVPIMMATTSFILAFPMALIW), 199–219 (AFSTGLLDSNTGVAVFLFGFI), 273–293 (FMQGEFPVMMFGLPAAALAIY), 303–323 (VVAGLMGSAALTSFLTGITEP), 328–348 (FLFVAPLLFFIHAVLDGLSFL), 355–375 (VHLGYTFSGGFIDYVLLGVLP), and 383–403 (VIPVGLVYAVIYYFVFRFLIV). A PTS EIIB type-1 domain is found at 425 to 506 (TELPYAVLEA…QQIMNGQVVE (82 aa)). Residue C447 is the Phosphocysteine intermediate; for EIIB activity of the active site. A PTS EIIA type-1 domain is found at 551–655 (DQVFSEKMMG…SDITPIIVTQ (105 aa)). Catalysis depends on H603, which acts as the Tele-phosphohistidine intermediate; for EIIA activity.

The protein resides in the cell membrane. It catalyses the reaction N(pros)-phospho-L-histidyl-[protein] + D-glucose(out) = D-glucose 6-phosphate(in) + L-histidyl-[protein]. The phosphoenolpyruvate-dependent sugar phosphotransferase system (sugar PTS), a major carbohydrate active transport system, catalyzes the phosphorylation of incoming sugar substrates concomitantly with their translocation across the cell membrane. This system is involved in glucose transport. The protein is PTS system glucose-specific EIICBA component (ptsG) of Staphylococcus aureus (strain JH9).